The primary structure comprises 173 residues: Putative metal-dependent hydrolase BCE_2729 (173 aa).

Zn(2+) is bound by residues histidine 65, histidine 156, and histidine 160.

Belongs to the metal hydrolase YfiT family. In terms of assembly, homodimer. It depends on Zn(2+) as a cofactor.

Its subcellular location is the cytoplasm. Functionally, possible metal-dependent hydrolase. The chain is Putative metal-dependent hydrolase BCE_2729 from Bacillus cereus (strain ATCC 10987 / NRS 248).